Here is a 205-residue protein sequence, read N- to C-terminus: MASDHQTQAGKPQPLNPKIIIFEQENFQGHSHELSGPCPNLKETGVEKAGSVLVQAGPWVGYEQANCKGEQFVFEKGEYPRWDSWTSSRRTDSLSSLRPIKVDSQEHKIILYENPNFTGKKMEIIDDDVPSFHAHGYQEKVSSVRVQSGTWVGYQYPGYRGLQYLLEKGDYKDSGDFGAPHPQVQSVRRIRDMQWHQRGAFHPSN.

Ala-2 is modified (N-acetylalanine). Residues 2–16 are N-terminal arm; that stretch reads ASDHQTQAGKPQPLN. 2 Beta/gamma crystallin 'Greek key' domains span residues 17–56 and 57–101; these read PKII…LVQA and GPWV…RPIK. Residues 102-106 form a connecting peptide region; sequence VDSQE. 2 consecutive Beta/gamma crystallin 'Greek key' domains span residues 107-148 and 149-191; these read HKII…RVQS and GTWV…RRIR. The interval 193–205 is C-terminal arm; that stretch reads MQWHQRGAFHPSN.

Belongs to the beta/gamma-crystallin family. As to quaternary structure, homo/heterodimer, or complexes of higher-order. The structure of beta-crystallin oligomers seems to be stabilized through interactions between the N-terminal arms.

In terms of biological role, crystallins are the dominant structural components of the vertebrate eye lens. This chain is Beta-crystallin B2 (CRYBB2), found in Canis lupus familiaris (Dog).